A 162-amino-acid chain; its full sequence is MLRALGSRLLVASRPAAYRSFQQSLRPVPRFFIHKMSTKTPINSPKLSSAGPYNQAIKANGVIYCSGQIPVANGKVIEGTVGDQTRQCLLNLQEVLTEAGSSLNKIVKVNIFLADMDDFAAVNKVYTEVLPDPKPARSCVAVKTVPLSTQGVKIEIECIALE.

Belongs to the RutC family.

Its subcellular location is the mitochondrion. It localises to the cytoplasm. In terms of biological role, plays a role in the maintenance of mitochondrial DNA. This Schizosaccharomyces pombe (strain 972 / ATCC 24843) (Fission yeast) protein is Protein mmf1, mitochondrial (mmf1).